The primary structure comprises 139 residues: Small ribosomal subunit protein bS6 (139 aa).

A disordered region spans residues 120–139 (KGASKVETPTGPESTDIQEK). Residues 130–139 (GPESTDIQEK) are compositionally biased toward polar residues.

Belongs to the bacterial ribosomal protein bS6 family.

In terms of biological role, binds together with bS18 to 16S ribosomal RNA. This chain is Small ribosomal subunit protein bS6 (rpsF), found in Borreliella burgdorferi (strain ATCC 35210 / DSM 4680 / CIP 102532 / B31) (Borrelia burgdorferi).